The chain runs to 490 residues: Cobyric acid synthase (490 aa).

The 188-residue stretch at 253 to 440 (KLRVAAPAAP…LHGVFDEPAA (188 aa)) folds into the GATase cobBQ-type domain. The active-site Nucleophile is Cys-334. Residue His-432 is part of the active site.

It belongs to the CobB/CobQ family. CobQ subfamily.

Its pathway is cofactor biosynthesis; adenosylcobalamin biosynthesis. Functionally, catalyzes amidations at positions B, D, E, and G on adenosylcobyrinic A,C-diamide. NH(2) groups are provided by glutamine, and one molecule of ATP is hydrogenolyzed for each amidation. In Chromobacterium violaceum (strain ATCC 12472 / DSM 30191 / JCM 1249 / CCUG 213 / NBRC 12614 / NCIMB 9131 / NCTC 9757 / MK), this protein is Cobyric acid synthase.